Here is a 285-residue protein sequence, read N- to C-terminus: Glutamate racemase (285 aa).

Substrate contacts are provided by residues 30–31 (DS) and 62–63 (YG). C94 acts as the Proton donor/acceptor in catalysis. 95–96 (NT) contacts substrate. Catalysis depends on C206, which acts as the Proton donor/acceptor. Residue 207–208 (TH) coordinates substrate.

Belongs to the aspartate/glutamate racemases family.

The enzyme catalyses L-glutamate = D-glutamate. It functions in the pathway cell wall biogenesis; peptidoglycan biosynthesis. Functionally, provides the (R)-glutamate required for cell wall biosynthesis. The protein is Glutamate racemase of Pectobacterium carotovorum subsp. carotovorum (strain PC1).